The sequence spans 194 residues: Protein GrpE (194 aa).

Residues methionine 1–glutamine 24 show a composition bias toward basic and acidic residues. A disordered region spans residues methionine 1–glutamate 41.

The protein belongs to the GrpE family. Homodimer.

Its subcellular location is the cytoplasm. Its function is as follows. Participates actively in the response to hyperosmotic and heat shock by preventing the aggregation of stress-denatured proteins, in association with DnaK and GrpE. It is the nucleotide exchange factor for DnaK and may function as a thermosensor. Unfolded proteins bind initially to DnaJ; upon interaction with the DnaJ-bound protein, DnaK hydrolyzes its bound ATP, resulting in the formation of a stable complex. GrpE releases ADP from DnaK; ATP binding to DnaK triggers the release of the substrate protein, thus completing the reaction cycle. Several rounds of ATP-dependent interactions between DnaJ, DnaK and GrpE are required for fully efficient folding. The chain is Protein GrpE from Carboxydothermus hydrogenoformans (strain ATCC BAA-161 / DSM 6008 / Z-2901).